The chain runs to 226 residues: PtdIns3K complex I subunit atg38 (226 aa).

Ser-2 carries the N-acetylserine modification. Coiled-coil stretches lie at residues 52–85 (DVTQAIDLLKQDITAKIQELELLIEKQSSEENNI) and 182–209 (FKEYGMKIDEITKENKKLANEIGRLRER).

It belongs to the ATG38 family. Homodimer. Component of the autophagy-specific VPS34 PI3-kinase complex I composed of VPS15, VPS30, VPS34, ATG14 and an ATG38 homodimer. Interacts directly with ATG14 and VPS34.

It is found in the cytoplasm. The protein localises to the preautophagosomal structure membrane. Its function is as follows. Autophagy-related protein required for cytoplasm to vacuole transport (Cvt) and autophagy as a part of the autophagy-specific VPS34 PI3-kinase complex I. This complex is essential to recruit the ATG8-phosphatidylinositol conjugate and the ATG12-ATG5 conjugate to the pre-autophagosomal structure. ATG38 is required for the integrity of the active PI3-kinase complex I by maintaining an association between VPS15-VPS34 and ATG14-VPS30 subcomplexes. This chain is PtdIns3K complex I subunit atg38, found in Saccharomyces cerevisiae (strain ATCC 204508 / S288c) (Baker's yeast).